We begin with the raw amino-acid sequence, 201 residues long: Putative lipoprotein Hmuk_2215 (201 aa).

An N-terminal signal peptide occupies residues 1–22 (MCPRPRRAVLLGLGVAMSAIAG). Position 23 is an N-acetylcysteine (Cys23). A lipid anchor (S-archaeol cysteine) is attached at Cys23. Disordered stretches follow at residues 25–78 (ETAP…ETSE) and 182–201 (ATRA…GDCP). The span at 69-78 (TRADETETSE) shows a compositional bias: basic and acidic residues.

Its subcellular location is the cell membrane. The sequence is that of Putative lipoprotein Hmuk_2215 from Halomicrobium mukohataei (strain ATCC 700874 / DSM 12286 / JCM 9738 / NCIMB 13541) (Haloarcula mukohataei).